Consider the following 428-residue polypeptide: 47 kDa outer membrane protein (428 aa).

The first 25 residues, 1 to 25 (MAKTSKFTQTLLASALAVVAGSASA), serve as a signal peptide directing secretion.

It belongs to the OmpP1/FadL family.

It is found in the cell outer membrane. This Pasteurella multocida (strain Pm70) protein is 47 kDa outer membrane protein.